Here is a 673-residue protein sequence, read N- to C-terminus: Poly(glycerol-phosphate) alpha-glucosyltransferase (673 aa).

A Phosphoserine modification is found at Ser2.

It belongs to the glycosyltransferase group 1 family. Glycosyltransferase 4 subfamily.

It is found in the cytoplasm. The enzyme catalyses 4-O-{[(2R)-1-glycerylphospho](n)-(2R)-1-glycerylphospho}-N-acetyl-beta-D-mannosaminyl-(1-&gt;4)-N-acetyl-alpha-D-glucosaminyl undecaprenyl diphosphate + n UDP-alpha-D-glucose = 4-O-{[(2R)-2-alpha-D-glucosyl-1-glycerylphospho](n)-(2R)-1-glycerylphospho}-N-acetyl-beta-D-mannosaminyl-(1-&gt;4)-N-acetyl-alpha-D-glucosaminyl undecaprenyl diphosphate + n UDP + n H(+). It participates in cell wall biogenesis; poly(glycerol phosphate) teichoic acid biosynthesis. In terms of biological role, catalyzes the addition of glucose to the C-2 hydroxy group of the glycerol units in teichoic acid. This Bacillus subtilis (strain 168) protein is Poly(glycerol-phosphate) alpha-glucosyltransferase (tagE).